The chain runs to 493 residues: UDP-N-acetylmuramoylalanine--D-glutamate ligase (493 aa).

An ATP-binding site is contributed by 126 to 132 (GTNGKTT).

This sequence belongs to the MurCDEF family.

The protein resides in the cytoplasm. The catalysed reaction is UDP-N-acetyl-alpha-D-muramoyl-L-alanine + D-glutamate + ATP = UDP-N-acetyl-alpha-D-muramoyl-L-alanyl-D-glutamate + ADP + phosphate + H(+). It participates in cell wall biogenesis; peptidoglycan biosynthesis. In terms of biological role, cell wall formation. Catalyzes the addition of glutamate to the nucleotide precursor UDP-N-acetylmuramoyl-L-alanine (UMA). The sequence is that of UDP-N-acetylmuramoylalanine--D-glutamate ligase from Mycolicibacterium smegmatis (strain ATCC 700084 / mc(2)155) (Mycobacterium smegmatis).